Reading from the N-terminus, the 236-residue chain is UPF0257 lipoprotein YnfC (236 aa).

A signal peptide spans 1–16 (MKYKLLPCLLAIFLTG). The N-palmitoyl cysteine moiety is linked to residue Cys-17. The S-diacylglycerol cysteine moiety is linked to residue Cys-17.

Belongs to the UPF0257 family.

It localises to the cell membrane. This Shigella flexneri protein is UPF0257 lipoprotein YnfC (ynfC).